The primary structure comprises 904 residues: Trichohyalin-like protein 1 (904 aa).

An EF-hand domain is found at 48 to 83; the sequence is CVLHAVEKNSNLLNIDSNGIISFDEFVLAIFNLLNL. Disordered stretches follow at residues 102–792 and 858–890; these read PEKE…CSVE and PYTR…HPQR. Residues 113-128 show a composition bias toward polar residues; that stretch reads QATTGDGQWTVGTSPT. Basic and acidic residues-rich tracts occupy residues 172–185, 222–240, 268–300, 349–371, and 385–398; these read ASEH…HLEG, TERK…EPAR, ATQR…DEPS, NLGE…ETKD, and SDMR…RGPE. Residues 443–452 show a composition bias toward polar residues; that stretch reads ETQYLSSEGG. A compositionally biased stretch (acidic residues) spans 524-536; the sequence is VEEEDGYQGEDPE. Residues 538–554 are compositionally biased toward polar residues; sequence PFTQSDEGSSETPNSLA. The span at 555 to 578 shows a compositional bias: low complexity; it reads SEEGNSSSETGELPVQGDSQSQGD. A compositionally biased stretch (polar residues) spans 586-598; that stretch reads GGHNNNPDTQRQG. Positions 759–770 are enriched in basic and acidic residues; that stretch reads GDQKSPAKKEHN. Residues 771-780 show a composition bias toward polar residues; it reads SSVPWSSLEK. A compositionally biased stretch (basic and acidic residues) spans 881–890; that stretch reads LEDKQGHPQR.

It belongs to the S-100 family.

This is Trichohyalin-like protein 1 (TCHHL1) from Homo sapiens (Human).